The sequence spans 288 residues: ATP synthase gamma chain (288 aa).

It belongs to the ATPase gamma chain family. As to quaternary structure, F-type ATPases have 2 components, CF(1) - the catalytic core - and CF(0) - the membrane proton channel. CF(1) has five subunits: alpha(3), beta(3), gamma(1), delta(1), epsilon(1). CF(0) has three main subunits: a, b and c.

It localises to the cell inner membrane. Its function is as follows. Produces ATP from ADP in the presence of a proton gradient across the membrane. The gamma chain is believed to be important in regulating ATPase activity and the flow of protons through the CF(0) complex. In Rickettsia akari (strain Hartford), this protein is ATP synthase gamma chain.